A 248-amino-acid chain; its full sequence is Pulmonary surfactant-associated protein A (248 aa).

The signal sequence occupies residues 1 to 20 (MLLCSLTLTLILLAVSGTKC). The Collagen-like domain maps to 31-100 (GVPGIPGSPG…PGERGPPGPP (70 aa)). The disordered stretch occupies residues 34 to 105 (GIPGSPGLPG…PPGPPAYPDE (72 aa)). Residues 54–65 (PGPPGPIGPPGG) show a composition bias toward pro residues. Residues 84–93 (ERGDKGEPGE) show a composition bias toward basic and acidic residues. The 114-residue stretch at 134–247 (VGEKVFSTNG…CLQYRLAICE (114 aa)) folds into the C-type lectin domain. Intrachain disulfides connect Cys155/Cys246 and Cys224/Cys238. Asn207 is a glycosylation site (N-linked (GlcNAc...) asparagine). Ca(2+) contacts are provided by Glu215, Arg217, Asn234, and Asp235.

This sequence belongs to the SFTPA family. Oligomeric complex of 6 set of homotrimers.

It is found in the secreted. Its subcellular location is the extracellular space. The protein resides in the extracellular matrix. The protein localises to the surface film. In terms of biological role, in presence of calcium ions, it binds to surfactant phospholipids and contributes to lower the surface tension at the air-liquid interface in the alveoli of the mammalian lung and is essential for normal respiration. Enhances the expression of MYO18A/SP-R210 on alveolar macrophages. In Equus caballus (Horse), this protein is Pulmonary surfactant-associated protein A (SFTPA1).